The following is a 475-amino-acid chain: Pyruvate kinase (475 aa).

Arg33 serves as a coordination point for substrate. Asn35, Ser37, and Asp67 together coordinate K(+). ATP is bound at residue 35 to 38 (NFSH). 2 residues coordinate ATP: Arg74 and Lys155. Residue Glu220 participates in Mg(2+) binding. 3 residues coordinate substrate: Gly243, Asp244, and Thr276. Residue Asp244 coordinates Mg(2+).

This sequence belongs to the pyruvate kinase family. In terms of assembly, homotetramer. Requires Mg(2+) as cofactor. It depends on K(+) as a cofactor.

It carries out the reaction pyruvate + ATP = phosphoenolpyruvate + ADP + H(+). It functions in the pathway carbohydrate degradation; glycolysis; pyruvate from D-glyceraldehyde 3-phosphate: step 5/5. In Corynebacterium glutamicum (strain ATCC 13032 / DSM 20300 / JCM 1318 / BCRC 11384 / CCUG 27702 / LMG 3730 / NBRC 12168 / NCIMB 10025 / NRRL B-2784 / 534), this protein is Pyruvate kinase (pyk).